A 598-amino-acid chain; its full sequence is Elongation factor 4 (598 aa).

The region spanning 2–183 is the tr-type G domain; that stretch reads KHIRNFCIIA…AIIEKIPHPK (182 aa). Residues 14–19 and 130–133 contribute to the GTP site; these read DHGKST and NKVD.

It belongs to the TRAFAC class translation factor GTPase superfamily. Classic translation factor GTPase family. LepA subfamily.

It localises to the cell inner membrane. The catalysed reaction is GTP + H2O = GDP + phosphate + H(+). Functionally, required for accurate and efficient protein synthesis under certain stress conditions. May act as a fidelity factor of the translation reaction, by catalyzing a one-codon backward translocation of tRNAs on improperly translocated ribosomes. Back-translocation proceeds from a post-translocation (POST) complex to a pre-translocation (PRE) complex, thus giving elongation factor G a second chance to translocate the tRNAs correctly. Binds to ribosomes in a GTP-dependent manner. The sequence is that of Elongation factor 4 from Flavobacterium psychrophilum (strain ATCC 49511 / DSM 21280 / CIP 103535 / JIP02/86).